The sequence spans 520 residues: Bifunctional purine biosynthesis protein PurH (520 aa).

Residues 1 to 150 enclose the MGS-like domain; sequence MSDDRKAIKR…KNHPSVAVVV (150 aa).

This sequence belongs to the PurH family.

The catalysed reaction is (6R)-10-formyltetrahydrofolate + 5-amino-1-(5-phospho-beta-D-ribosyl)imidazole-4-carboxamide = 5-formamido-1-(5-phospho-D-ribosyl)imidazole-4-carboxamide + (6S)-5,6,7,8-tetrahydrofolate. The enzyme catalyses IMP + H2O = 5-formamido-1-(5-phospho-D-ribosyl)imidazole-4-carboxamide. It functions in the pathway purine metabolism; IMP biosynthesis via de novo pathway; 5-formamido-1-(5-phospho-D-ribosyl)imidazole-4-carboxamide from 5-amino-1-(5-phospho-D-ribosyl)imidazole-4-carboxamide (10-formyl THF route): step 1/1. Its pathway is purine metabolism; IMP biosynthesis via de novo pathway; IMP from 5-formamido-1-(5-phospho-D-ribosyl)imidazole-4-carboxamide: step 1/1. This Corynebacterium glutamicum (strain R) protein is Bifunctional purine biosynthesis protein PurH.